A 152-amino-acid chain; its full sequence is Transcriptional repressor NrdR (152 aa).

A zinc finger spans residues 3-34; that stretch reads CPFCNHGELKVIDSRNAPEANAIKRRRECLKC. Residues 48–138 enclose the ATP-cone domain; that stretch reads LQVLKRDGRY…VYRRFKDVGE (91 aa).

This sequence belongs to the NrdR family. Requires Zn(2+) as cofactor.

Functionally, negatively regulates transcription of bacterial ribonucleotide reductase nrd genes and operons by binding to NrdR-boxes. The chain is Transcriptional repressor NrdR from Chlamydia pneumoniae (Chlamydophila pneumoniae).